Reading from the N-terminus, the 45-residue chain is Iota-conotoxin-like R11.13 (45 aa).

Disulfide bonds link Cys-5/Cys-19, Cys-12/Cys-22, Cys-18/Cys-27, and Cys-21/Cys-36. Leu-43 bears the D-leucine mark. A propeptide (removed by a carboxypeptidase) is located at residue Arg-45.

Belongs to the conotoxin I1 superfamily. As to expression, expressed by the venom duct.

The protein resides in the secreted. Functionally, iota-conotoxins bind to voltage-gated sodium channels (Nav) and act as agonists by shifting the voltage-dependence of activation to more hyperpolarized levels. Produces general excitatory symptoms. In Conus radiatus (Rayed cone), this protein is Iota-conotoxin-like R11.13.